The chain runs to 570 residues: Periplasmic trehalase (570 aa).

Residues 1–34 (MIPPEIRRSVLLQKAIKLALAGTLLTFASFSATA) form the signal peptide. Substrate-binding positions include Arg-159, 166–167 (WD), Asn-203, 212–214 (RSQ), 284–286 (RPE), and Gly-317. Active-site proton donor/acceptor residues include Asp-319 and Glu-503. Glu-518 contributes to the substrate binding site. Positions 545-570 (PCDSVPSTRPASLSATPTKTPSAATQ) are disordered. The span at 554 to 570 (PASLSATPTKTPSAATQ) shows a compositional bias: low complexity.

The protein belongs to the glycosyl hydrolase 37 family. As to quaternary structure, monomer.

The protein localises to the periplasm. The enzyme catalyses alpha,alpha-trehalose + H2O = alpha-D-glucose + beta-D-glucose. In terms of biological role, provides the cells with the ability to utilize trehalose at high osmolarity by splitting it into glucose molecules that can subsequently be taken up by the phosphotransferase-mediated uptake system. The chain is Periplasmic trehalase from Salmonella agona (strain SL483).